The chain runs to 229 residues: Putative N-acetylmannosamine-6-phosphate 2-epimerase 2 (229 aa).

It belongs to the NanE family.

The catalysed reaction is an N-acyl-D-glucosamine 6-phosphate = an N-acyl-D-mannosamine 6-phosphate. It functions in the pathway amino-sugar metabolism; N-acetylneuraminate degradation; D-fructose 6-phosphate from N-acetylneuraminate: step 3/5. Its function is as follows. Converts N-acetylmannosamine-6-phosphate (ManNAc-6-P) to N-acetylglucosamine-6-phosphate (GlcNAc-6-P). The protein is Putative N-acetylmannosamine-6-phosphate 2-epimerase 2 of Salmonella paratyphi A (strain ATCC 9150 / SARB42).